The primary structure comprises 549 residues: Chaperonin GroEL (549 aa).

ATP-binding positions include 30-33 (TLGP), K51, 87-91 (DGTTT), G415, and D497.

It belongs to the chaperonin (HSP60) family. In terms of assembly, forms a cylinder of 14 subunits composed of two heptameric rings stacked back-to-back. Interacts with the co-chaperonin GroES.

It is found in the cytoplasm. It catalyses the reaction ATP + H2O + a folded polypeptide = ADP + phosphate + an unfolded polypeptide.. Its function is as follows. Together with its co-chaperonin GroES, plays an essential role in assisting protein folding. The GroEL-GroES system forms a nano-cage that allows encapsulation of the non-native substrate proteins and provides a physical environment optimized to promote and accelerate protein folding. This chain is Chaperonin GroEL, found in Pectobacterium atrosepticum (strain SCRI 1043 / ATCC BAA-672) (Erwinia carotovora subsp. atroseptica).